We begin with the raw amino-acid sequence, 432 residues long: Glutamyl-tRNA reductase (432 aa).

Substrate is bound by residues 55–58 (TCNR), Ser-114, 119–121 (ETQ), and Gln-125. Cys-56 (nucleophile) is an active-site residue. 194-199 (GAGEMI) is an NADP(+) binding site.

Belongs to the glutamyl-tRNA reductase family. As to quaternary structure, homodimer.

The enzyme catalyses (S)-4-amino-5-oxopentanoate + tRNA(Glu) + NADP(+) = L-glutamyl-tRNA(Glu) + NADPH + H(+). It participates in porphyrin-containing compound metabolism; protoporphyrin-IX biosynthesis; 5-aminolevulinate from L-glutamyl-tRNA(Glu): step 1/2. Its function is as follows. Catalyzes the NADPH-dependent reduction of glutamyl-tRNA(Glu) to glutamate 1-semialdehyde (GSA). This Burkholderia orbicola (strain MC0-3) protein is Glutamyl-tRNA reductase.